We begin with the raw amino-acid sequence, 31 residues long: Cytochrome b6-f complex subunit 6 (31 aa).

A helical membrane pass occupies residues 4-24; that stretch reads ITSYFGFLLAALTITSAIFIG.

This sequence belongs to the PetL family. As to quaternary structure, the 4 large subunits of the cytochrome b6-f complex are cytochrome b6, subunit IV (17 kDa polypeptide, PetD), cytochrome f and the Rieske protein, while the 4 small subunits are PetG, PetL, PetM and PetN. The complex functions as a dimer.

It is found in the plastid. The protein localises to the chloroplast thylakoid membrane. Its function is as follows. Component of the cytochrome b6-f complex, which mediates electron transfer between photosystem II (PSII) and photosystem I (PSI), cyclic electron flow around PSI, and state transitions. PetL is important for photoautotrophic growth as well as for electron transfer efficiency and stability of the cytochrome b6-f complex. The sequence is that of Cytochrome b6-f complex subunit 6 from Ficus carica (Common fig).